The sequence spans 468 residues: Cysteine--tRNA ligase (468 aa).

C33 is a Zn(2+) binding site. A 'HIGH' region motif is present at residues 35–45 (ATVQGLPHIGH). Zn(2+) is bound by residues C211, H236, and E240. Positions 267-271 (KMSKS) match the 'KMSKS' region motif. Residue K270 coordinates ATP.

Belongs to the class-I aminoacyl-tRNA synthetase family. As to quaternary structure, monomer. Zn(2+) serves as cofactor.

It localises to the cytoplasm. The catalysed reaction is tRNA(Cys) + L-cysteine + ATP = L-cysteinyl-tRNA(Cys) + AMP + diphosphate. In Mycolicibacterium paratuberculosis (strain ATCC BAA-968 / K-10) (Mycobacterium paratuberculosis), this protein is Cysteine--tRNA ligase.